Consider the following 324-residue polypeptide: Olfactory receptor 5A2 (324 aa).

Residues 1–26 are Extracellular-facing; the sequence is MAVGRNNTIVTKFILLGLSDHPQMKI. N-linked (GlcNAc...) asparagine glycosylation occurs at N6. The chain crosses the membrane as a helical span at residues 27-47; sequence FLFMLFLGLYLLTLAWNLSLI. The Cytoplasmic segment spans residues 48 to 55; it reads ALIKMDSH. Residues 56–76 traverse the membrane as a helical segment; it reads LHMPMYFFLSNLSFLDICYVS. Topologically, residues 77–100 are extracellular; that stretch reads STAPKMLSDIITEQKTISFVGCAT. Residues C98 and C190 are joined by a disulfide bond. A helical membrane pass occupies residues 101 to 121; it reads QYFVFCGMGLTECFLLAAMAY. Residues 122–134 are Cytoplasmic-facing; it reads DRYAAICNPLLYT. The chain crosses the membrane as a helical span at residues 135–155; that stretch reads VLISHTLCLKMVVGAYVGGFL. At 156-197 the chain is on the extracellular side; it reads SSFIETYSVYQHDFCGPYMINHFFCDLPPVLALSCSDTFTSE. Residues 198 to 218 traverse the membrane as a helical segment; sequence VVTFIVSVVVGIVSVLVVLIS. At 219 to 238 the chain is on the cytoplasmic side; sequence YGYIVAAVVKISSATGRTKA. A helical transmembrane segment spans residues 239 to 259; sequence FSTCASHLTAVTLFYGSGFFM. At 260 to 272 the chain is on the extracellular side; the sequence is YMRPSSSYSLNRD. A helical transmembrane segment spans residues 273–293; it reads KVVSIFYALVIPVVNPIIYSF. Residues 294–324 lie on the Cytoplasmic side of the membrane; that stretch reads RNKEIKNAMRKAMERDPGISHGGPFIFMTLG.

Belongs to the G-protein coupled receptor 1 family.

It localises to the cell membrane. Odorant receptor. The polypeptide is Olfactory receptor 5A2 (OR5A2) (Homo sapiens (Human)).